The primary structure comprises 178 residues: Caveolin-1 (178 aa).

Position 2 is an N-acetylserine (Ser-2). Position 2 is a phosphoserine (Ser-2). The segment at 2–94 is required for homooligomerization; it reads SGGKYVDSEG…WKASFTTFTV (93 aa). Over 2 to 104 the chain is Cytoplasmic; the sequence is SGGKYVDSEG…TKYWFYRLLS (103 aa). N6-acetyllysine; alternate is present on Lys-5. Lys-5 participates in a covalent cross-link: Glycyl lysine isopeptide (Lys-Gly) (interchain with G-Cter in ubiquitin); alternate. At Tyr-6 the chain carries Phosphotyrosine. Residue Ser-9 is modified to Phosphoserine. Position 14 is a phosphotyrosine; by ABL1 (Tyr-14). Residue Tyr-25 is modified to Phosphotyrosine. Glycyl lysine isopeptide (Lys-Gly) (interchain with G-Cter in ubiquitin) cross-links involve residues Lys-26, Lys-30, Lys-39, Lys-47, and Lys-57. An interaction with CAVIN3 region spans residues 82–94; the sequence is DGIWKASFTTFTV. Residues 105 to 125 constitute an intramembrane region (helical); that stretch reads TIFGIPMALIWGIYFAILSFL. The Cytoplasmic portion of the chain corresponds to 126-178; the sequence is HIWAVVPCIKSFLIEIQCISRVYSIYVHTFCDPLFEAIGKIFSNVRISMQKEI. The interacts with SPRY1, SPRY2, SPRY3 and SPRY4 stretch occupies residues 131 to 142; the sequence is VPCIKSFLIEIQ. Residues Cys-133, Cys-143, and Cys-156 are each lipidated (S-palmitoyl cysteine). The interacts with SPRY1, SPRY2, and SPRY4 stretch occupies residues 149-160; it reads SIYVHTFCDPLF. The tract at residues 167–178 is interacts with SPRY1, SPRY2, SPRY3 and SPRY4; sequence FSNVRISMQKEI.

This sequence belongs to the caveolin family. In terms of assembly, homooligomer. Interacts with GLIPR2. Interacts with NOSTRIN. Interacts with SNAP25 and STX1A. Interacts (via the N-terminus) with DPP4; the interaction is direct. Interacts with CTNNB1, CDH1 and JUP. Interacts with PACSIN2; this interaction induces membrane tubulation. Interacts with SLC7A9. Interacts with BMX and BTK. Interacts with TGFBR1. Interacts with CAVIN3 (via leucine-zipper domain) in a cholesterol-sensitive manner. Interacts with CAVIN1. Interacts with EHD2 in a cholesterol-dependent manner. Forms a ternary complex with UBXN6 and VCP; mediates CAV1 targeting to lysosomes for degradation. Interacts with ABCG1; this interaction regulates ABCG1-mediated cholesterol efflux. Interacts with NEU3; this interaction enhances NEU3 sialidase activity within caveola. Interacts (via C-terminus) with SPRY1, SPRY2 (via C-terminus), SPRY3, and SPRY4. Interacts with IGFBP5; this interaction allows trafficking of IGFBP5 from the plasma membrane to the nucleus. Phosphorylated at Tyr-14 by ABL1 in response to oxidative stress. In terms of processing, ubiquitinated. Undergo monoubiquitination and multi- and/or polyubiquitination. Monoubiquitination of N-terminal lysines promotes integration in a ternary complex with UBXN6 and VCP which promotes oligomeric CAV1 targeting to lysosomes for degradation. Ubiquitinated by ZNRF1; leading to degradation and modulation of the TLR4-mediated immune response.

Its subcellular location is the golgi apparatus membrane. The protein resides in the cell membrane. It localises to the membrane. It is found in the caveola. The protein localises to the membrane raft. May act as a scaffolding protein within caveolar membranes. Forms a stable heterooligomeric complex with CAV2 that targets to lipid rafts and drives caveolae formation. Mediates the recruitment of CAVIN proteins (CAVIN1/2/3/4) to the caveolae. Interacts directly with G-protein alpha subunits and can functionally regulate their activity. Involved in the costimulatory signal essential for T-cell receptor (TCR)-mediated T-cell activation. Its binding to DPP4 induces T-cell proliferation and NF-kappa-B activation in a T-cell receptor/CD3-dependent manner. Recruits CTNNB1 to caveolar membranes and may regulate CTNNB1-mediated signaling through the Wnt pathway. Negatively regulates TGFB1-mediated activation of SMAD2/3 by mediating the internalization of TGFBR1 from membrane rafts leading to its subsequent degradation. Binds 20(S)-hydroxycholesterol (20(S)-OHC). The protein is Caveolin-1 (CAV1) of Oryctolagus cuniculus (Rabbit).